We begin with the raw amino-acid sequence, 299 residues long: ATP phosphoribosyltransferase (299 aa).

The protein belongs to the ATP phosphoribosyltransferase family. Long subfamily. The cofactor is Mg(2+).

The protein resides in the cytoplasm. The catalysed reaction is 1-(5-phospho-beta-D-ribosyl)-ATP + diphosphate = 5-phospho-alpha-D-ribose 1-diphosphate + ATP. The protein operates within amino-acid biosynthesis; L-histidine biosynthesis; L-histidine from 5-phospho-alpha-D-ribose 1-diphosphate: step 1/9. Feedback inhibited by histidine. Functionally, catalyzes the condensation of ATP and 5-phosphoribose 1-diphosphate to form N'-(5'-phosphoribosyl)-ATP (PR-ATP). Has a crucial role in the pathway because the rate of histidine biosynthesis seems to be controlled primarily by regulation of HisG enzymatic activity. This chain is ATP phosphoribosyltransferase, found in Shewanella woodyi (strain ATCC 51908 / MS32).